The following is a 571-amino-acid chain: Urease subunit alpha (571 aa).

In terms of domain architecture, Urease spans 133–571; the sequence is GGIDTHVHFI…LPLTQRYFLF (439 aa). Ni(2+) is bound by residues His138, His140, and Lys221. Lys221 is subject to N6-carboxylysine. His223 is a binding site for substrate. Positions 250 and 276 each coordinate Ni(2+). Catalysis depends on His324, which acts as the Proton donor. Ni(2+) is bound at residue Asp364.

The protein belongs to the metallo-dependent hydrolases superfamily. Urease alpha subunit family. As to quaternary structure, heterotrimer of UreA (gamma), UreB (beta) and UreC (alpha) subunits. Three heterotrimers associate to form the active enzyme. Requires Ni cation as cofactor. Carboxylation allows a single lysine to coordinate two nickel ions.

The protein localises to the cytoplasm. It catalyses the reaction urea + 2 H2O + H(+) = hydrogencarbonate + 2 NH4(+). It participates in nitrogen metabolism; urea degradation; CO(2) and NH(3) from urea (urease route): step 1/1. This Staphylococcus saprophyticus subsp. saprophyticus (strain ATCC 15305 / DSM 20229 / NCIMB 8711 / NCTC 7292 / S-41) protein is Urease subunit alpha.